The primary structure comprises 221 residues: Small ribosomal subunit protein uS2 (221 aa).

The protein belongs to the universal ribosomal protein uS2 family.

The protein is Small ribosomal subunit protein uS2 of Methanococcus maripaludis (strain C6 / ATCC BAA-1332).